Consider the following 608-residue polypeptide: MKWVTFLLLLFVSDSAFSRGLFRRDAHKSEIAHRFKDLGEQHFKGLVLIAFSQFLQKCPYEEHVKLVNEVTDFAKTCVADESAENCDKSLHTLFGDKLCAIPTLRDSYGELADCCAKKEPERNECFLKHKDDHPNLPPFVRPDAEAMCTSFQENAVTFMGHYLHEVARRHPYFYAPELLYYAEKYSAIMTECCGEADKAACITPKLDALKEKALASSVNQRLKCSSLQRFGQRAFKAWAVARMSQKFPKADFAEITKLATDLTKLTEECCHGDLLECADDRAELAKYMCENQASISSKLQACCDKPVLKKSHCLSEVENDDLPADLPSLAADFVEDKEVCKNYAEAKDVFLGTFLYEYARRHPDYSVALLLRLAKKYEATLEKCCAEADPSACYGKVLDEFQPLVEEPKNLVKANCELFEKLGEYGFQNALIVRYTQKAPQVSTPTLVEAARNLGKVGSKCCVLPEAQRLPCVEDYISAILNRVCVLHEKTPVSEQVTKCCTGSVVERRPCFSALPVDETYVPKEFKAETFTFHADICSLPEKEKQMKKQAALVELVKHKPKATGPQLRTVLGEFTAFLDKCCKAEDKEACFSEDGPKLVASSQAALA.

The signal sequence occupies residues 1–18 (MKWVTFLLLLFVSDSAFS). A propeptide spanning residues 19–24 (RGLFRR) is cleaved from the precursor. Albumin domains lie at 19-211 (RGLF…ALKE), 212-403 (KALA…EFQP), and 404-601 (LVEE…KLVA). Position 27 (His27) interacts with Cu cation. A Phosphoserine modification is found at Ser29. Ca(2+) is bound by residues Glu30 and Asp37. Cys77 and Cys86 are oxidised to a cystine. Residues Ser82 and Ser89 each carry the phosphoserine modification. Position 91 (His91) interacts with Zn(2+). 6 disulfide bridges follow: Cys99/Cys115, Cys114/Cys125, Cys148/Cys193, Cys192/Cys201, Cys224/Cys270, and Cys269/Cys277. Residue Glu268 participates in Ca(2+) binding. 2 residues coordinate Zn(2+): His271 and Asp273. 3 residues coordinate Ca(2+): Asp273, Glu276, and Asp279. Disulfide bonds link Cys289–Cys303, Cys302–Cys313, Cys340–Cys385, Cys384–Cys393, Cys416–Cys462, Cys461–Cys472, Cys485–Cys501, and Cys500–Cys511. Ser297 is modified (phosphoserine). Position 443 is a phosphoserine (Ser443). 2 positions are modified to phosphothreonine: Thr444 and Thr446. Lys460 carries the N6-succinyllysine modification. Ser513 carries the phosphoserine modification. Intrachain disulfides connect Cys538–Cys583 and Cys582–Cys591. Lys543 carries the post-translational modification N6-succinyllysine. Residue Lys558 is modified to N6-methyllysine. Residue Thr570 is modified to Phosphothreonine. Residue Lys588 is modified to N6-succinyllysine.

Belongs to the ALB/AFP/VDB family. In terms of assembly, interacts with FCGRT; this interaction regulates ALB homeostasis. Interacts with TASOR. In plasma, occurs in a covalently-linked complex with chromophore-bound alpha-1-microglobulin; this interaction does not prevent fatty acid binding to ALB. As to expression, plasma.

The protein resides in the secreted. Its function is as follows. Binds water, Ca(2+), Na(+), K(+), fatty acids, hormones, bilirubin and drugs. Its main function is the regulation of the colloidal osmotic pressure of blood. Major zinc transporter in plasma, typically binds about 80% of all plasma zinc. Major calcium and magnesium transporter in plasma, binds approximately 45% of circulating calcium and magnesium in plasma. Potentially has more than two calcium-binding sites and might additionally bind calcium in a non-specific manner. The shared binding site between zinc and calcium at residue Asp-273 suggests a crosstalk between zinc and calcium transport in the blood. The rank order of affinity is zinc &gt; calcium &gt; magnesium. Binds to the bacterial siderophore enterobactin and inhibits enterobactin-mediated iron uptake of E.coli from ferric transferrin, and may thereby limit the utilization of iron and growth of enteric bacteria such as E.coli. Does not prevent iron uptake by the bacterial siderophore aerobactin. The polypeptide is Albumin (Mesocricetus auratus (Golden hamster)).